The primary structure comprises 186 residues: Small ribosomal subunit protein uS5 (186 aa).

One can recognise an S5 DRBM domain in the interval F18–V81.

The protein belongs to the universal ribosomal protein uS5 family. In terms of assembly, part of the 30S ribosomal subunit. Contacts proteins S4 and S8.

In terms of biological role, with S4 and S12 plays an important role in translational accuracy. Functionally, located at the back of the 30S subunit body where it stabilizes the conformation of the head with respect to the body. This Parvibaculum lavamentivorans (strain DS-1 / DSM 13023 / NCIMB 13966) protein is Small ribosomal subunit protein uS5.